The sequence spans 156 residues: 6,7-dimethyl-8-ribityllumazine synthase (156 aa).

Residues F22, 56–58, and 80–82 each bind 5-amino-6-(D-ribitylamino)uracil; these read AFE and AVV. 85–86 is a binding site for (2S)-2-hydroxy-3-oxobutyl phosphate; it reads ET. H88 serves as the catalytic Proton donor. A 5-amino-6-(D-ribitylamino)uracil-binding site is contributed by F113. Residue R127 participates in (2S)-2-hydroxy-3-oxobutyl phosphate binding.

It belongs to the DMRL synthase family.

The enzyme catalyses (2S)-2-hydroxy-3-oxobutyl phosphate + 5-amino-6-(D-ribitylamino)uracil = 6,7-dimethyl-8-(1-D-ribityl)lumazine + phosphate + 2 H2O + H(+). It functions in the pathway cofactor biosynthesis; riboflavin biosynthesis; riboflavin from 2-hydroxy-3-oxobutyl phosphate and 5-amino-6-(D-ribitylamino)uracil: step 1/2. Its function is as follows. Catalyzes the formation of 6,7-dimethyl-8-ribityllumazine by condensation of 5-amino-6-(D-ribitylamino)uracil with 3,4-dihydroxy-2-butanone 4-phosphate. This is the penultimate step in the biosynthesis of riboflavin. This is 6,7-dimethyl-8-ribityllumazine synthase from Pediococcus pentosaceus (strain ATCC 25745 / CCUG 21536 / LMG 10740 / 183-1w).